A 393-amino-acid polypeptide reads, in one-letter code: Cysteine protease ATG4B (393 aa).

Cys-73 functions as the Nucleophile in the catalytic mechanism. Active-site residues include Asp-278 and His-280. The LIR motif lies at 388-391 (FEIL).

The protein belongs to the peptidase C54 family.

The protein localises to the cytoplasm. It localises to the cytosol. Its subcellular location is the cytoplasmic vesicle. The protein resides in the autophagosome. It is found in the endoplasmic reticulum. The protein localises to the mitochondrion. It carries out the reaction [protein]-C-terminal L-amino acid-glycyl-phosphatidylethanolamide + H2O = [protein]-C-terminal L-amino acid-glycine + a 1,2-diacyl-sn-glycero-3-phosphoethanolamine. The catalysed reaction is [protein]-C-terminal L-amino acid-glycyl-phosphatidylserine + H2O = [protein]-C-terminal L-amino acid-glycine + a 1,2-diacyl-sn-glycero-3-phospho-L-serine. Functionally, cysteine protease that plays a key role in autophagy by mediating both proteolytic activation and delipidation of ATG8 family proteins. Required for canonical autophagy (macroautophagy), non-canonical autophagy as well as for mitophagy. The protease activity is required for proteolytic activation of ATG8 family proteins: cleaves the C-terminal amino acid of ATG8 proteins to reveal a C-terminal glycine. Exposure of the glycine at the C-terminus is essential for ATG8 proteins conjugation to phosphatidylethanolamine (PE) and insertion to membranes, which is necessary for autophagy. Protease activity is also required to counteract formation of high-molecular weight conjugates of ATG8 proteins (ATG8ylation): acts as a deubiquitinating-like enzyme that removes ATG8 conjugated to other proteins, such as ATG3. In addition to the protease activity, also mediates delipidation of ATG8 family proteins. Catalyzes delipidation of PE-conjugated forms of ATG8 proteins during macroautophagy. Also involved in non-canonical autophagy, a parallel pathway involving conjugation of ATG8 proteins to single membranes at endolysosomal compartments, by catalyzing delipidation of ATG8 proteins conjugated to phosphatidylserine (PS). In Gallus gallus (Chicken), this protein is Cysteine protease ATG4B.